The sequence spans 488 residues: Cytochrome P450 family 716 subfamily AD polypeptide 2 (488 aa).

The helical transmembrane segment at 5 to 25 (LLLLSTLLILTLCCHFFYLFI) threads the bilayer. C433 contributes to the heme binding site.

Belongs to the cytochrome P450 family. Heme serves as cofactor. Expressed in maturing fruits and in juice vesicles.

It localises to the membrane. It catalyses the reaction (1R,2R,3S,8R,10R,11R,15S,16S)-3-(acetyloxy)-15-[(4R)-4-[(2S)-3,3-dimethyloxiran-2-yl]-1,4-dihydroxybutan-2-yl]-2,7,7,11,16-pentamethyl-5-oxo-6-oxatetracyclo[9.7.0.0(2,8).0(12,16)]octadec-12-en-10-yl acetate + reduced [NADPH--hemoprotein reductase] + O2 = (1R,2R,3S,8R,10R,11R,15S,16S)-3-(acetyloxy)-15-(1-hydroxy-4-oxobutan-2-yl)-2,7,7,11,16-pentamethyl-5-oxo-6-oxatetracyclo[9.7.0.0(2,8).0(12,16)]octadec-12-en-10-yl acetate + 2-methylpropanoate + oxidized [NADPH--hemoprotein reductase] + H2O + 2 H(+). The protein operates within secondary metabolite biosynthesis; terpenoid biosynthesis. Its function is as follows. Monooxygenase involved in the biosynthesis of limonoids triterpene natural products such as limonin, a compound with insecticidal activity responsible for the bitter taste in citrus. Catalyzes the formation of (1R,2R,3S,8R,10R,11R,15S,16S)-3-(acetyloxy)-15-(1-hydroxy-4-oxobutan-2-yl)-2,7,7,11,16-pentamethyl-5-oxo-6-oxatetracyclo[9.7.0.0(2,8).0(12,16)]octadec-12-en-10-yl acetate. The sequence is that of Cytochrome P450 family 716 subfamily AD polypeptide 2 from Citrus sinensis (Sweet orange).